Consider the following 481-residue polypeptide: MSLRVYNTLSREKETFVPHKAGRVGMYVCGPTTYDYIHLGNARPLVVFDTIRRYLEHVGYEVVYIQNFTDIDDKIIHRAKEIGEDPIAMAARFVEEYYRDAKALNVRPATIHPKVSAHMAEIIAMIGVLVEKGHAYELGGDVYFSIPSFKDYGKLSGRSLEDLQAGARVDVNERKRHPMDFALWKGAKPGEPSWDSPWGKGRPGWHIECSAMSRKYLGDAFDIHGGGQDLIFPHHENEIAQSEACTGTSPMARYWLHNGFITVNQEKMSKSLGNFFTLREILKRFPGDVIRFYLLSTHYRSPIDFDDSKLEAAQKGLQRLRTSRRLIEEALAASGKEGAERPAGQREKLEEQWLAAKKGFREAMDDDFNTALALSMLFDLAREANTFLHGGFALTPEDRQLLLQVAETFEELAGVLGIDLAGGAAAADDNTVDGLMNLLIGIRAEARKKKDWATADRIRDGLKELGIVIEDTPQGARWKKA.

Cys-29 contacts Zn(2+). A 'HIGH' region motif is present at residues 31-41 (PTTYDYIHLGN). Zn(2+) contacts are provided by Cys-209, His-234, and Glu-238. The 'KMSKS' region signature appears at 267-271 (KMSKS). Residue Lys-270 coordinates ATP.

Belongs to the class-I aminoacyl-tRNA synthetase family. In terms of assembly, monomer. Zn(2+) is required as a cofactor.

The protein localises to the cytoplasm. It catalyses the reaction tRNA(Cys) + L-cysteine + ATP = L-cysteinyl-tRNA(Cys) + AMP + diphosphate. The chain is Cysteine--tRNA ligase from Heliobacterium modesticaldum (strain ATCC 51547 / Ice1).